The primary structure comprises 279 residues: Large ribosomal subunit protein uL2 (279 aa).

The tract at residues 222–264 (GVAMNPVDHPHGGGEGRTSGGRNPVTPAGKPTKGAKTRVNKAT) is disordered.

This sequence belongs to the universal ribosomal protein uL2 family. Part of the 50S ribosomal subunit. Forms a bridge to the 30S subunit in the 70S ribosome.

One of the primary rRNA binding proteins. Required for association of the 30S and 50S subunits to form the 70S ribosome, for tRNA binding and peptide bond formation. It has been suggested to have peptidyltransferase activity; this is somewhat controversial. Makes several contacts with the 16S rRNA in the 70S ribosome. The chain is Large ribosomal subunit protein uL2 from Caulobacter sp. (strain K31).